A 211-amino-acid chain; its full sequence is MTIGVIGRKCGMTRIFTEEGVSIPVTVIEIEPNRVTQFKTEETDGYRAVQVTVGERRASRVTAAQAGHFAKANVAAGRGVWEFRLEEGDFQAGDLIKAELFTAGQLVDVTGQSKGKGFAGTIKRWNFRGQDNTHGNSVSHRVPGSIGQCQTPGRVFKGKKMSGHMGAERVTVQSLEVVRVDAERNLLLIKGAVPGATGGDVVVRPAVKARG.

Gln150 is subject to N5-methylglutamine.

This sequence belongs to the universal ribosomal protein uL3 family. In terms of assembly, part of the 50S ribosomal subunit. Forms a cluster with proteins L14 and L19. Methylated by PrmB.

Its function is as follows. One of the primary rRNA binding proteins, it binds directly near the 3'-end of the 23S rRNA, where it nucleates assembly of the 50S subunit. This chain is Large ribosomal subunit protein uL3, found in Pseudomonas putida (strain GB-1).